The following is a 438-amino-acid chain: Probable exopolygalacturonase B (438 aa).

Positions M1 to G15 are cleaved as a signal peptide. N118, N185, and N225 each carry an N-linked (GlcNAc...) asparagine glycan. One copy of the PbH1 1 repeat lies at T209 to N248. D255 functions as the Proton donor in the catalytic mechanism. A disulfide bond links C257 and C274. N263 and N275 each carry an N-linked (GlcNAc...) asparagine glycan. The active site involves H278. 2 PbH1 repeats span residues I295–A316 and I327–Q348. N-linked (GlcNAc...) asparagine glycans are attached at residues N302, N329, N354, and N366. Cysteines 392 and 398 form a disulfide. One copy of the PbH1 4 repeat lies at C398–C430. 2 N-linked (GlcNAc...) asparagine glycosylation sites follow: N400 and N407.

It belongs to the glycosyl hydrolase 28 family.

The protein localises to the secreted. The catalysed reaction is [(1-&gt;4)-alpha-D-galacturonosyl](n) + H2O = alpha-D-galacturonate + [(1-&gt;4)-alpha-D-galacturonosyl](n-1). Specific in hydrolyzing the terminal glycosidic bond of polygalacturonic acid and oligogalacturonates. In Aspergillus niger (strain ATCC MYA-4892 / CBS 513.88 / FGSC A1513), this protein is Probable exopolygalacturonase B (pgxB).